Reading from the N-terminus, the 553-residue chain is Mucolipin-3 (553 aa).

Residues 1–62 are Cytoplasmic-facing; sequence MANPEIVISS…FWARGRKPWK (62 aa). Residues 52–62 are interaction with phosphoinositides; that stretch reads KFWARGRKPWK. The helical transmembrane segment at 63-83 threads the bilayer; the sequence is LAIQILKIAMVTIQLVLFGLS. At 84–283 the chain is on the extracellular side; the sequence is NQMVVAFKEE…VSGSIQKNTH (200 aa). The interval 104–118 is extracellular/lumenal pore loop; that stretch reads KGYIDRMDDTYAVYT. N-linked (GlcNAc...) asparagine glycosylation occurs at Asn138. A disulfide bridge links Cys159 with Cys185. A glycan (N-linked (GlcNAc...) asparagine) is linked at Asn205. Cys238 and Cys269 are disulfide-bonded. A helical membrane pass occupies residues 284–304; the sequence is NMMIFDAFVILTCLVSLILCI. The Cytoplasmic portion of the chain corresponds to 305–341; sequence RSVISGLQLQQEFVNFFLLHYKKDVSVSDQMEFVNGW. The helical transmembrane segment at 342 to 362 threads the bilayer; that stretch reads YIMIIISDILTIIGSILKMEI. At 363–371 the chain is on the extracellular side; it reads QAKSLTSYD. A helical membrane pass occupies residues 372–392; that stretch reads VCSILLGTSTMLVWLGVIRYL. At 393–414 the chain is on the cytoplasmic side; that stretch reads GFFAKYNLLILTLQAALPNVIR. A helical transmembrane segment spans residues 415-435; sequence FCCCAAMIYLGYCFCGWIVLG. Topologically, residues 436-443 are extracellular; the sequence is PYHNKFRS. Residues 444–464 constitute an intramembrane region (pore-forming); it reads LNMVSECLFSLINGDDMFATF. The Selectivity filter signature appears at 456–459; the sequence is NGDD. The Extracellular segment spans residues 465–475; that stretch reads AKMQQKSYLVW. Residues 476–497 form a helical membrane-spanning segment; it reads LFSRIYLYSFISLFIYMILSLF. Residues 498 to 553 are Cytoplasmic-facing; sequence IALITDTYETIKHYQQDGFPETELRTFISECKDLPNSGKFRLEDDPPVSLFCCCKK.

It belongs to the transient receptor (TC 1.A.4) family. Polycystin subfamily. MCOLN3 sub-subfamily. In terms of assembly, homotetramer. Can heterooligomerize with MCOLN1; heteromeric assemblies have different channel properties as compared to the respective homooligomers and may be tissue-specific. May heterooligomerize with TRPV5 to form a functional distinct ion channel. Interacts with GABARAPL2. N-glycosylated.

The protein localises to the lysosome membrane. It localises to the early endosome membrane. It is found in the late endosome membrane. The protein resides in the cytoplasmic vesicle. Its subcellular location is the autophagosome membrane. The protein localises to the cell projection. It localises to the stereocilium membrane. The catalysed reaction is Ca(2+)(in) = Ca(2+)(out). The enzyme catalyses Mg(2+)(in) = Mg(2+)(out). It carries out the reaction K(+)(in) = K(+)(out). It catalyses the reaction Na(+)(in) = Na(+)(out). With respect to regulation, channel activity is activated by PtdIns(3,5)P2 (phosphatidylinositol 3,5-bisphosphate). Inhibited by lumenal H(+) and Na(+). The channel pore shows dynamic behavior and undergoes spontaneous, Ca(2+)-dependent modulation when conducting Ca(2+). Nonselective cation channel probably playing a role in the regulation of membrane trafficking events. Acts as a Ca(2+)-permeable cation channel with inwardly rectifying activity. Mediates release of Ca(2+) from endosomes to the cytoplasm, contributes to endosomal acidification and is involved in the regulation of membrane trafficking and fusion in the endosomal pathway. Also permeable to Mg(2+), Na(+) and K(+). Does not seem to act as mechanosensory transduction channel in inner ear sensory hair cells. Proposed to play a critical role at the cochlear stereocilia ankle-link region during hair-bundle growth. Involved in the regulation of autophagy. Through association with GABARAPL2 may be involved in autophagosome formation possibly providing Ca(2+) for the fusion process. Through a possible and probably tissue-specific heteromerization with MCOLN1 may be at least in part involved in many lysosome-dependent cellular events. Possible heteromeric ion channel assemblies with TRPV5 show pharmacological similarity with TRPML3. This chain is Mucolipin-3, found in Callithrix jacchus (White-tufted-ear marmoset).